A 326-amino-acid polypeptide reads, in one-letter code: Phosphate acyltransferase (326 aa).

The protein belongs to the PlsX family. In terms of assembly, homodimer. Probably interacts with PlsY.

Its subcellular location is the cytoplasm. It catalyses the reaction a fatty acyl-[ACP] + phosphate = an acyl phosphate + holo-[ACP]. It participates in lipid metabolism; phospholipid metabolism. Functionally, catalyzes the reversible formation of acyl-phosphate (acyl-PO(4)) from acyl-[acyl-carrier-protein] (acyl-ACP). This enzyme utilizes acyl-ACP as fatty acyl donor, but not acyl-CoA. The protein is Phosphate acyltransferase of Macrococcus caseolyticus (strain JCSC5402) (Macrococcoides caseolyticum).